The chain runs to 161 residues: Protein-export protein SecB (161 aa).

This sequence belongs to the SecB family. As to quaternary structure, homotetramer, a dimer of dimers. One homotetramer interacts with 1 SecA dimer.

The protein localises to the cytoplasm. Functionally, one of the proteins required for the normal export of preproteins out of the cell cytoplasm. It is a molecular chaperone that binds to a subset of precursor proteins, maintaining them in a translocation-competent state. It also specifically binds to its receptor SecA. The sequence is that of Protein-export protein SecB from Pseudomonas putida (strain ATCC 700007 / DSM 6899 / JCM 31910 / BCRC 17059 / LMG 24140 / F1).